The primary structure comprises 304 residues: Pseudouridine-5'-phosphate glycosidase (304 aa).

Glu25 functions as the Proton donor in the catalytic mechanism. Substrate-binding residues include Lys88 and Val108. Asp140 is a Mn(2+) binding site. Position 142–144 (142–144 (SAD)) interacts with substrate. Residue Lys161 is the Nucleophile of the active site.

It belongs to the pseudouridine-5'-phosphate glycosidase family. As to quaternary structure, homotrimer. Mn(2+) serves as cofactor.

It catalyses the reaction D-ribose 5-phosphate + uracil = psi-UMP + H2O. Functionally, catalyzes the reversible cleavage of pseudouridine 5'-phosphate (PsiMP) to ribose 5-phosphate and uracil. Functions biologically in the cleavage direction, as part of a pseudouridine degradation pathway. The polypeptide is Pseudouridine-5'-phosphate glycosidase (Paracoccus denitrificans (strain Pd 1222)).